We begin with the raw amino-acid sequence, 241 residues long: Phycocyanobilin:ferredoxin oxidoreductase (241 aa).

It belongs to the HY2 family.

The enzyme catalyses (2R,3Z)-phycocyanobilin + 4 oxidized [2Fe-2S]-[ferredoxin] = biliverdin IXalpha + 4 reduced [2Fe-2S]-[ferredoxin] + 4 H(+). Its function is as follows. Catalyzes the four-electron reduction of biliverdin IX-alpha (2-electron reduction at both the A and D rings); the reaction proceeds via an isolatable 2-electron intermediate, 181,182-dihydrobiliverdin. The polypeptide is Phycocyanobilin:ferredoxin oxidoreductase (Prochlorococcus marinus (strain MIT 9301)).